The primary structure comprises 197 residues: Dephospho-CoA kinase (197 aa).

A DPCK domain is found at isoleucine 2–alanine 197. Alanine 10–leucine 15 lines the ATP pocket.

Belongs to the CoaE family.

Its subcellular location is the cytoplasm. It catalyses the reaction 3'-dephospho-CoA + ATP = ADP + CoA + H(+). It participates in cofactor biosynthesis; coenzyme A biosynthesis; CoA from (R)-pantothenate: step 5/5. Catalyzes the phosphorylation of the 3'-hydroxyl group of dephosphocoenzyme A to form coenzyme A. The polypeptide is Dephospho-CoA kinase (Dichelobacter nodosus (Bacteroides nodosus)).